The sequence spans 1062 residues: Integrin alpha-8 (1062 aa).

The N-terminal stretch at 1–35 (MSAGTHCGPPGNRAPPFARLCCVSAALGMLWSPAC) is a signal peptide. Over 36–1010 (LAFNLDVDKL…ATPNVSFSIP (975 aa)) the chain is Extracellular. FG-GAP repeat units follow at residues 41-104 (DVDK…RSAQ), 121-182 (NGTK…AYAE), 187-239 (RNSN…IANY), 252-305 (KQTD…STDM), 306-371 (TFIQ…LLFQ), 372-430 (DPQV…GLHS), and 434-497 (QVLQ…LHPM). Residue Asn80 is glycosylated (N-linked (GlcNAc...) asparagine). Cys95 and Cys105 form a disulfide bridge. Asn121 carries N-linked (GlcNAc...) asparagine glycosylation. A disulfide bridge connects residues Cys149 and Cys170. N-linked (GlcNAc...) asparagine glycosylation is present at Asn176. A disulfide bridge connects residues Cys186 and Cys199. The N-linked (GlcNAc...) asparagine glycan is linked to Asn238. Ca(2+)-binding residues include Glu274, Thr276, Asp278, and Glu282. Residues Asn301 and Asn310 are each glycosylated (N-linked (GlcNAc...) asparagine). Residues Asp328, Asn330, Asp332, Asp336, Asp394, Asn396, Asp398, Tyr400, and Asp402 each coordinate Ca(2+). A Cell attachment site motif is present at residues 454–456 (RGD). Ca(2+)-binding residues include Asp458, Asp460, Asn462, Tyr464, and Asp466. The N-linked (GlcNAc...) asparagine glycan is linked to Asn503. 2 disulfides stabilise this stretch: Cys506–Cys517 and Cys523–Cys579. Asn600 and Asn604 each carry an N-linked (GlcNAc...) asparagine glycan. Intrachain disulfides connect Cys640–Cys646 and Cys712–Cys725. Residues Asn718, Asn736, Asn752, Asn779, Asn895, and Asn922 are each glycosylated (N-linked (GlcNAc...) asparagine). 2 disulfide bridges follow: Cys866/Cys923 and Cys928/Cys933. Residue Asn1004 is glycosylated (N-linked (GlcNAc...) asparagine). The chain crosses the membrane as a helical span at residues 1011–1031 (LWVIILAILLGLLVLAILTLA). Residues 1032 to 1062 (LWKCGFFDRARPPQDEMTDREQLTSDKTPEA) lie on the Cytoplasmic side of the membrane.

The protein belongs to the integrin alpha chain family. As to quaternary structure, heterodimer of an alpha and a beta subunit. The alpha subunit is composed of a heavy and a light chain linked by a disulfide bond. Alpha-8 associates with beta-1. In brain, expressed in deep cortex, hippocampal CA1, basolateral amygdala and striatum. In kidney, expressed in glomerular mesengium (at protein level).

Its subcellular location is the membrane. It localises to the cell membrane. Its function is as follows. Integrin alpha-8/beta-1 functions in the genesis of kidney and probably of other organs by regulating the recruitment of mesenchymal cells into epithelial structures. It recognizes the sequence R-G-D in a wide array of ligands including TNC, FN1, SPP1 TGFB1, TGFB3 and VTN. NPNT is probably its functional ligand in kidney genesis. Neuronal receptor for TNC it mediates cell-cell interactions and regulates neurite outgrowth of sensory and motor neurons. The chain is Integrin alpha-8 (Itga8) from Mus musculus (Mouse).